The following is a 206-amino-acid chain: Ribosomal RNA large subunit methyltransferase E (206 aa).

Positions 60, 62, 80, 96, and 121 each coordinate S-adenosyl-L-methionine. Lys-161 serves as the catalytic Proton acceptor.

It belongs to the class I-like SAM-binding methyltransferase superfamily. RNA methyltransferase RlmE family.

Its subcellular location is the cytoplasm. The catalysed reaction is uridine(2552) in 23S rRNA + S-adenosyl-L-methionine = 2'-O-methyluridine(2552) in 23S rRNA + S-adenosyl-L-homocysteine + H(+). Specifically methylates the uridine in position 2552 of 23S rRNA at the 2'-O position of the ribose in the fully assembled 50S ribosomal subunit. The protein is Ribosomal RNA large subunit methyltransferase E of Nitrosospira multiformis (strain ATCC 25196 / NCIMB 11849 / C 71).